A 135-amino-acid chain; its full sequence is Small ribosomal subunit protein uS12 (135 aa).

A disordered region spans residues 1 to 23 (MPTINQLVRKGRHSKTTKSDSPA). Aspartate 102 is subject to 3-methylthioaspartic acid.

Belongs to the universal ribosomal protein uS12 family. As to quaternary structure, part of the 30S ribosomal subunit. Contacts proteins S8 and S17. May interact with IF1 in the 30S initiation complex.

In terms of biological role, with S4 and S5 plays an important role in translational accuracy. Functionally, interacts with and stabilizes bases of the 16S rRNA that are involved in tRNA selection in the A site and with the mRNA backbone. Located at the interface of the 30S and 50S subunits, it traverses the body of the 30S subunit contacting proteins on the other side and probably holding the rRNA structure together. The combined cluster of proteins S8, S12 and S17 appears to hold together the shoulder and platform of the 30S subunit. The protein is Small ribosomal subunit protein uS12 of Lactobacillus gasseri (strain ATCC 33323 / DSM 20243 / BCRC 14619 / CIP 102991 / JCM 1131 / KCTC 3163 / NCIMB 11718 / NCTC 13722 / AM63).